Consider the following 325-residue polypeptide: uncharacterized protein (325 aa).

The tract at residues 296-325 is disordered; it reads QRTLSSSMEEADRPRRMSVTQPHLPPVPSA.

This sequence belongs to the NDRG family.

This is an uncharacterized protein from Caenorhabditis elegans.